Here is a 422-residue protein sequence, read N- to C-terminus: uncharacterized protein (422 aa).

A disordered region spans residues 1-22 (MIQNNPKSIGSSSNKSARSSGS). A compositionally biased stretch (low complexity) spans 7 to 22 (KSIGSSSNKSARSSGS).

This is an uncharacterized protein from Acanthamoeba polyphaga mimivirus (APMV).